We begin with the raw amino-acid sequence, 667 residues long: Sterile alpha motif domain-containing protein 15 (667 aa).

Residues 1 to 18 (MAEVPEDYDSGPDEDGEP) show a composition bias toward acidic residues. 2 disordered regions span residues 1–108 (MAEV…KSER) and 147–424 (SAME…IKSK). 4 stretches are compositionally biased toward basic and acidic residues: residues 19 to 53 (ESER…HEPQ), 84 to 93 (IAKESKRDVP), 187 to 196 (ESLRVQHEET), and 228 to 266 (TKPD…KSSE). Residues 268 to 277 (AGLEPPEETQ) show a composition bias toward acidic residues. 4 stretches are compositionally biased toward basic and acidic residues: residues 284 to 314 (MQRK…KSTD), 322 to 338 (EEIK…KPNE), 346 to 364 (EMMK…EEKN), and 381 to 422 (PRVE…EPIK). The 64-residue stretch at 538-601 (WDPEKVAEWI…SRHTRELLEI (64 aa)) folds into the SAM domain.

This is Sterile alpha motif domain-containing protein 15 (SAMD15) from Macaca fascicularis (Crab-eating macaque).